Consider the following 310-residue polypeptide: Vomeronasal type-1 receptor 3 (310 aa).

At 1-5 (MASKD) the chain is on the extracellular side. A helical membrane pass occupies residues 6 to 26 (FAIGMILSQIMVGFLGNFFLL). The Cytoplasmic segment spans residues 27–50 (YHYSFLHFTRGMLQSTDLTLKHLT). A helical transmembrane segment spans residues 51–71 (IANSLVILSKGIPQTMAAFGL). Topologically, residues 72–91 (KDSLSDIGCKFVFYVHRVGR) are extracellular. The helical transmembrane segment at 92–112 (AVCTGNACLLSVFQVITISSS) threads the bilayer. Residues 113–129 (EFRWAELKLHAHKYIRS) are Cytoplasmic-facing. The helical transmembrane segment at 130 to 150 (FILVLCWILNTLVNITVPLHV) threads the bilayer. The Extracellular portion of the chain corresponds to 151–186 (TGKWNSINSTKTNDYGYCSGGSRSRIPHSLHIVLLS). N-linked (GlcNAc...) asparagine glycosylation occurs at Asn158. Residues 187–207 (SLDVLCLGLMTLASGSMVFIL) traverse the membrane as a helical segment. The Cytoplasmic portion of the chain corresponds to 208 to 235 (HRLKQQVQHIHGTNLSPRSSPESRVTQS). A helical transmembrane segment spans residues 236–258 (ILVLVSTLCYFTRSPPSLHMSLF). At 259–263 (PNPSW) the chain is on the extracellular side. A helical transmembrane segment spans residues 264-284 (WPLNASALITACFPTVSPFVL). Topologically, residues 285–310 (MSRHPRIPRLGSACCGRNPQFPKLVR) are cytoplasmic.

Belongs to the G-protein coupled receptor 1 family.

The protein localises to the cell membrane. Its function is as follows. Putative pheromone receptor. This chain is Vomeronasal type-1 receptor 3 (VN1R3), found in Pan troglodytes (Chimpanzee).